Reading from the N-terminus, the 377-residue chain is Nitric oxide reductase FlRd-NAD(+) reductase (377 aa).

Belongs to the FAD-dependent oxidoreductase family. FAD is required as a cofactor.

The protein resides in the cytoplasm. It carries out the reaction 2 reduced [nitric oxide reductase rubredoxin domain] + NAD(+) + H(+) = 2 oxidized [nitric oxide reductase rubredoxin domain] + NADH. It participates in nitrogen metabolism; nitric oxide reduction. One of at least two accessory proteins for anaerobic nitric oxide (NO) reductase. Reduces the rubredoxin moiety of NO reductase. This is Nitric oxide reductase FlRd-NAD(+) reductase from Escherichia coli (strain 55989 / EAEC).